The sequence spans 669 residues: Sodium-dependent phosphate transporter (669 aa).

Over Met1 to Asp6 the chain is Extracellular. A helical membrane pass occupies residues Met7–Ala27. Over Asn28–Lys47 the chain is Cytoplasmic. A helical membrane pass occupies residues Ala48 to Thr68. The Extracellular portion of the chain corresponds to Asp69–Glu86. A helical transmembrane segment spans residues Phe87–Thr107. A topological domain (cytoplasmic) is located at residue Arg108. A helical transmembrane segment spans residues Ala109–Ala129. Topologically, residues Thr130 to Asn143 are extracellular. A helical transmembrane segment spans residues Ile144–Thr164. Over Val165 to Phe186 the chain is Cytoplasmic. Residues Leu187–Ile207 form a helical membrane-spanning segment. Residues Asn208 to Ser239 are Extracellular-facing. The helical transmembrane segment at Ile240–Ile260 threads the bilayer. Residues Tyr261–Lys502 lie on the Cytoplasmic side of the membrane. Positions Ala311–Val335 are enriched in polar residues. 2 disordered regions span residues Ala311–Ala364 and Thr392–Glu444. A compositionally biased stretch (basic and acidic residues) spans Lys342–Lys352. Residues Asn395 to Gly433 are compositionally biased toward low complexity. Residues Val503–Gly523 form a helical membrane-spanning segment. At Tyr524–Gly542 the chain is on the extracellular side. Residues Phe543–Leu563 form a helical membrane-spanning segment. Over Ser564–Arg632 the chain is Cytoplasmic. Residues Thr633–Tyr653 form a helical membrane-spanning segment. Residues Ser654–Val669 lie on the Extracellular side of the membrane.

It belongs to the inorganic phosphate transporter (PiT) (TC 2.A.20) family.

It localises to the cell membrane. It catalyses the reaction 2 Na(+)(out) + phosphate(out) = 2 Na(+)(in) + phosphate(in). Functionally, sodium-phosphate symporter which preferentially transports the monovalent form of phosphate with a stoichiometry of two sodium ions per phosphate ion. The polypeptide is Sodium-dependent phosphate transporter (Plasmodium falciparum).